We begin with the raw amino-acid sequence, 633 residues long: MTNWSSKDSLKVYNVPYWGAGFFNINDAGHVTVAPDKSRPDAHIVISDAIEQLRQSGLTTPVLLRFPDILKSRVDALFNAFGQAIEKSGYEGDYLCVYPIKVNQQSRVIETISQSYSDKPRLGLEAGSKPELLAVLSHHHEQGSVIVCNGYKDREYIRHALLGNLMGHKVYIVVEKPSELEMVLDESARLNIKPNIGVRAKLASTGSGMWESSGGSMSKFGLSASQILALVERLRSLDKLDCLQLLHFHLGSQIANIRDIQGGIRECGRFYSELRRLGVPIDVVDVGGGLGVDYEGTRSQSHCSANYSLSEYANNVVWGIGDVCREFDLPYPTIISESGRALTAHHAVLVTNLIGAEGVEMSDISAPDEDAPTLLQNMWQGWLDLRGEDPSLLEIFHDSVADLGDVNTQYTMGLLNLEQRAWAEMLHQNTCLALKEMLNPVNRNHRALADELSEKLADKCFANFSLFQSLPDAWGIGQVFPVMPLTGLDRPLSRRGILMDITCDSDGQVEHYVDGLGVESTLPMPQYEENEVCYVGFFLVGAYQEILGDLHNLFGDTHCAEVCLDEEGKMDIRNVVRGDTVDQLLRYVNIDPSVIRENYQRIVSHPALDDATRKALLDELELGLQGYAYLEDE.

Lysine 101 is modified (N6-(pyridoxal phosphate)lysine). Residue 284–294 participates in substrate binding; it reads VDVGGGLGVDY.

Belongs to the Orn/Lys/Arg decarboxylase class-II family. SpeA subfamily. Mg(2+) serves as cofactor. It depends on pyridoxal 5'-phosphate as a cofactor.

The enzyme catalyses L-arginine + H(+) = agmatine + CO2. It participates in amine and polyamine biosynthesis; agmatine biosynthesis; agmatine from L-arginine: step 1/1. Its function is as follows. Catalyzes the biosynthesis of agmatine from arginine. This chain is Biosynthetic arginine decarboxylase, found in Aeromonas salmonicida (strain A449).